Here is a 179-residue protein sequence, read N- to C-terminus: Putative undecaprenyl-phosphate N-acetylgalactosaminyl 1-phosphate transferase (179 aa).

A helical membrane pass occupies residues 39–59; the sequence is IWFALIGLAIALPMIAVFSIL.

It belongs to the bacterial sugar transferase family.

It is found in the cell membrane. It carries out the reaction di-trans,octa-cis-undecaprenyl phosphate + UDP-N-acetyl-alpha-D-galactosamine = N-acetyl-alpha-D-galactosaminyl-di-trans,octa-cis-undecaprenyl diphosphate + UMP. The protein operates within cell wall biogenesis; teichuronic acid biosynthesis. Might mediate the very first reaction in teichuronic synthesis, i.e. the formation of lipid-linked N-acetylglucosamine. The chain is Putative undecaprenyl-phosphate N-acetylgalactosaminyl 1-phosphate transferase (tuaA) from Bacillus subtilis (strain 168).